The following is an 88-amino-acid chain: U-scoloptoxin(XY)-Er1a (88 aa).

The first 24 residues, 1–24 (MASQVVLSFALVVVLAVFVGQVDS), serve as a signal peptide directing secretion. Residues 66–88 (RPELSPGAWDDSSEEKDNEASLA) are disordered. Residues 79 to 88 (EEKDNEASLA) constitute a propeptide that is removed on maturation.

This sequence belongs to the scoloptoxin-XY family. In terms of processing, contains 3 disulfide bonds. In terms of tissue distribution, expressed by the venom gland.

It is found in the secreted. This is U-scoloptoxin(XY)-Er1a from Ethmostigmus rubripes (Giant centipede).